An 80-amino-acid chain; its full sequence is Secreted transmembrane peptide 3 (80 aa).

The first 27 residues, 1 to 27, serve as a signal peptide directing secretion; the sequence is MGLKMSSNALLLSLFLLLLCLFSEIGG. Residues 44–80 form a disordered region; that stretch reads IATPPSLTCGGQRLGGPQPRLSPCPRPRPRPRPRTGS. An SCOOP motif motif is present at residues 62–80; it reads PRLSPCPRPRPRPRPRTGS. Positions 70–80 are enriched in basic residues; that stretch reads PRPRPRPRTGS.

It belongs to the serine rich endogenous peptide (SCOOP) phytocytokine family. Interacts with MIK2 (via extracellular leucine-rich repeat domain); this interaction triggers the formation of complex between MIK2 and the BAK1/SERK3 and SERK4 coreceptors, and subsequent BAK1 activation by phosphorylation. As to expression, mostly expressed in leaves, and, to a lower extent, in roots, stems, siliques, seeds and flowers.

It localises to the cell membrane. The protein localises to the secreted. It is found in the extracellular space. The protein resides in the apoplast. Its subcellular location is the endoplasmic reticulum. It localises to the golgi apparatus. Brassicaceae-specific phytocytokine (plant endogenous peptide released into the apoplast) perceived by MIK2 in a BAK1/SERK3 and SERK4 coreceptors-dependent manner, that modulates various physiological and antimicrobial processes including growth prevention and reactive oxygen species (ROS) response regulation. The protein is Secreted transmembrane peptide 3 of Arabidopsis thaliana (Mouse-ear cress).